The following is a 144-amino-acid chain: D-aminoacyl-tRNA deacylase (144 aa).

The short motif at 137 to 138 (GP) is the Gly-cisPro motif, important for rejection of L-amino acids element.

It belongs to the DTD family. Homodimer.

It is found in the cytoplasm. The enzyme catalyses glycyl-tRNA(Ala) + H2O = tRNA(Ala) + glycine + H(+). It carries out the reaction a D-aminoacyl-tRNA + H2O = a tRNA + a D-alpha-amino acid + H(+). An aminoacyl-tRNA editing enzyme that deacylates mischarged D-aminoacyl-tRNAs. Also deacylates mischarged glycyl-tRNA(Ala), protecting cells against glycine mischarging by AlaRS. Acts via tRNA-based rather than protein-based catalysis; rejects L-amino acids rather than detecting D-amino acids in the active site. By recycling D-aminoacyl-tRNA to D-amino acids and free tRNA molecules, this enzyme counteracts the toxicity associated with the formation of D-aminoacyl-tRNA entities in vivo and helps enforce protein L-homochirality. The protein is D-aminoacyl-tRNA deacylase of Marinomonas sp. (strain MWYL1).